Here is a 554-residue protein sequence, read N- to C-terminus: Glutamine--tRNA ligase (554 aa).

Residues 34 to 44 (PEPNGYLHIGH) carry the 'HIGH' region motif. Residues 35-37 (EPN) and 41-47 (HIGHAKS) contribute to the ATP site. 2 residues coordinate L-glutamine: D67 and Y212. Residues T231, 261–262 (RL), and 269–271 (MSK) contribute to the ATP site. Positions 268–272 (VMSKR) match the 'KMSKS' region motif. The interaction with tRNA stretch occupies residues 317–324 (TKQDNTIE).

The protein belongs to the class-I aminoacyl-tRNA synthetase family. As to quaternary structure, monomer.

The protein localises to the cytoplasm. The enzyme catalyses tRNA(Gln) + L-glutamine + ATP = L-glutaminyl-tRNA(Gln) + AMP + diphosphate. The polypeptide is Glutamine--tRNA ligase (Escherichia coli O7:K1 (strain IAI39 / ExPEC)).